A 267-amino-acid polypeptide reads, in one-letter code: Formamidopyrimidine-DNA glycosylase (267 aa).

Catalysis depends on Pro-2, which acts as the Schiff-base intermediate with DNA. Catalysis depends on Glu-3, which acts as the Proton donor. Lys-53 serves as the catalytic Proton donor; for beta-elimination activity. DNA contacts are provided by His-82 and Arg-100. The FPG-type zinc-finger motif lies at 230 to 264 (AVYGREGLPCPACGRPVERRVVAGRGTHFCPTCQG). Catalysis depends on Arg-254, which acts as the Proton donor; for delta-elimination activity.

The protein belongs to the FPG family. In terms of assembly, monomer. Zn(2+) serves as cofactor.

It carries out the reaction Hydrolysis of DNA containing ring-opened 7-methylguanine residues, releasing 2,6-diamino-4-hydroxy-5-(N-methyl)formamidopyrimidine.. It catalyses the reaction 2'-deoxyribonucleotide-(2'-deoxyribose 5'-phosphate)-2'-deoxyribonucleotide-DNA = a 3'-end 2'-deoxyribonucleotide-(2,3-dehydro-2,3-deoxyribose 5'-phosphate)-DNA + a 5'-end 5'-phospho-2'-deoxyribonucleoside-DNA + H(+). Its function is as follows. Involved in base excision repair of DNA damaged by oxidation or by mutagenic agents. Acts as a DNA glycosylase that recognizes and removes damaged bases. Has a preference for oxidized purines, such as 7,8-dihydro-8-oxoguanine (8-oxoG). Has AP (apurinic/apyrimidinic) lyase activity and introduces nicks in the DNA strand. Cleaves the DNA backbone by beta-delta elimination to generate a single-strand break at the site of the removed base with both 3'- and 5'-phosphates. This chain is Formamidopyrimidine-DNA glycosylase, found in Thermus thermophilus (strain ATCC BAA-163 / DSM 7039 / HB27).